The sequence spans 136 residues: uncharacterized protein (136 aa).

2 helical membrane passes run 25-47 (ILKA…PHAF) and 78-97 (ITGA…LLTA).

It is found in the cell membrane. This is an uncharacterized protein from Bacillus subtilis (strain 168).